The following is a 354-amino-acid chain: Hyaluronan and proteoglycan link protein 1 (354 aa).

Positions 1–15 (MKSLLLLVLISFCWA) are excised as a propeptide. N-linked (GlcNAc...) asparagine glycans are attached at residues N21 and N56. One can recognise an Ig-like V-type domain in the interval 38–152 (PRLLVEAEQA…EGLEDDTAVV (115 aa)). Disulfide bonds link C61–C139, C181–C252, C205–C226, C279–C349, and C304–C325. Link domains follow at residues 159 to 254 (VVFP…FCFT) and 259 to 351 (GRFY…YCFR).

This sequence belongs to the HAPLN family.

Its subcellular location is the secreted. It is found in the extracellular space. The protein resides in the extracellular matrix. Functionally, stabilizes the aggregates of proteoglycan monomers with hyaluronic acid in the extracellular cartilage matrix. The protein is Hyaluronan and proteoglycan link protein 1 (HAPLN1) of Bos taurus (Bovine).